The following is a 414-amino-acid chain: Putative truncated GMC-type inactive oxidoreductase R832 (414 aa).

Positions 1–20 are cleaved as a signal peptide; the sequence is MNPTKLFLVFVAFAFAIINA. 38 to 67 is a binding site for FAD; it reads DYIIVGSGPGGSRAVQQCIAKGHKCTLVER.

This sequence belongs to the GMC oxidoreductase family. The cofactor is FAD.

This chain is Putative truncated GMC-type inactive oxidoreductase R832, found in Acanthamoeba polyphaga (Amoeba).